A 434-amino-acid chain; its full sequence is UDP-N-acetylglucosamine 1-carboxyvinyltransferase 1 (434 aa).

K22–N23 is a phosphoenolpyruvate binding site. A UDP-N-acetyl-alpha-D-glucosamine-binding site is contributed by R93. Catalysis depends on C117, which acts as the Proton donor. C117 carries the post-translational modification 2-(S-cysteinyl)pyruvic acid O-phosphothioketal. UDP-N-acetyl-alpha-D-glucosamine contacts are provided by residues R122–Q126, D306, and V328.

This sequence belongs to the EPSP synthase family. MurA subfamily.

Its subcellular location is the cytoplasm. The catalysed reaction is phosphoenolpyruvate + UDP-N-acetyl-alpha-D-glucosamine = UDP-N-acetyl-3-O-(1-carboxyvinyl)-alpha-D-glucosamine + phosphate. The protein operates within cell wall biogenesis; peptidoglycan biosynthesis. Functionally, cell wall formation. Adds enolpyruvyl to UDP-N-acetylglucosamine. The sequence is that of UDP-N-acetylglucosamine 1-carboxyvinyltransferase 1 from Bacillus cereus (strain ATCC 14579 / DSM 31 / CCUG 7414 / JCM 2152 / NBRC 15305 / NCIMB 9373 / NCTC 2599 / NRRL B-3711).